Consider the following 518-residue polypeptide: Lysine--tRNA ligase (518 aa).

Mg(2+) is bound by residues Glu407 and Glu414.

The protein belongs to the class-II aminoacyl-tRNA synthetase family. In terms of assembly, homodimer. Mg(2+) is required as a cofactor.

The protein localises to the cytoplasm. It carries out the reaction tRNA(Lys) + L-lysine + ATP = L-lysyl-tRNA(Lys) + AMP + diphosphate. This Helicobacter hepaticus (strain ATCC 51449 / 3B1) protein is Lysine--tRNA ligase.